The sequence spans 345 residues: NADPH dehydrogenase (345 aa).

23-26 lines the FMN pocket; sequence SPMC. Residue Tyr-28 participates in substrate binding. Residues Ala-60 and Gln-102 each contribute to the FMN site. 164 to 167 lines the substrate pocket; sequence HGAH. FMN is bound by residues Arg-215 and 307–308; that span reads GR.

The protein belongs to the NADH:flavin oxidoreductase/NADH oxidase family. NamA subfamily. In terms of assembly, homotetramer. Requires FMN as cofactor.

It catalyses the reaction A + NADPH + H(+) = AH2 + NADP(+). Catalyzes the reduction of the double bond of an array of alpha,beta-unsaturated aldehydes and ketones. It also reduces the nitro group of nitroester and nitroaromatic compounds. It could have a role in detoxification processes. The protein is NADPH dehydrogenase of Bacillus cereus (strain G9842).